The chain runs to 473 residues: Bifunctional protein HldE (473 aa).

Residues 1-316 form a ribokinase region; sequence MILPDFSLAR…AIAIHGQRAP (316 aa). 193-196 serves as a coordination point for ATP; the sequence is NLSE. Asp-262 is a catalytic residue. The cytidylyltransferase stretch occupies residues 342-473; the sequence is VTNGCFDLLH…TRIIEAIRNG (132 aa).

This sequence in the N-terminal section; belongs to the carbohydrate kinase PfkB family. It in the C-terminal section; belongs to the cytidylyltransferase family. As to quaternary structure, homodimer.

It catalyses the reaction D-glycero-beta-D-manno-heptose 7-phosphate + ATP = D-glycero-beta-D-manno-heptose 1,7-bisphosphate + ADP + H(+). It carries out the reaction D-glycero-beta-D-manno-heptose 1-phosphate + ATP + H(+) = ADP-D-glycero-beta-D-manno-heptose + diphosphate. The protein operates within nucleotide-sugar biosynthesis; ADP-L-glycero-beta-D-manno-heptose biosynthesis; ADP-L-glycero-beta-D-manno-heptose from D-glycero-beta-D-manno-heptose 7-phosphate: step 1/4. Its pathway is nucleotide-sugar biosynthesis; ADP-L-glycero-beta-D-manno-heptose biosynthesis; ADP-L-glycero-beta-D-manno-heptose from D-glycero-beta-D-manno-heptose 7-phosphate: step 3/4. Functionally, catalyzes the phosphorylation of D-glycero-D-manno-heptose 7-phosphate at the C-1 position to selectively form D-glycero-beta-D-manno-heptose-1,7-bisphosphate. In terms of biological role, catalyzes the ADP transfer from ATP to D-glycero-beta-D-manno-heptose 1-phosphate, yielding ADP-D-glycero-beta-D-manno-heptose. This Methylococcus capsulatus (strain ATCC 33009 / NCIMB 11132 / Bath) protein is Bifunctional protein HldE.